The primary structure comprises 401 residues: UPF0283 membrane protein SO_1811 (401 aa).

Positions 1 to 22 (MSVELLPHSTEPHANGADKSVS) are disordered. 3 helical membrane-spanning segments follow: residues 99 to 119 (LARL…VLGL), 129 to 149 (LFSF…VGVI), and 239 to 259 (ESAV…IILW).

It belongs to the UPF0283 family.

It localises to the cell inner membrane. This is UPF0283 membrane protein SO_1811 from Shewanella oneidensis (strain ATCC 700550 / JCM 31522 / CIP 106686 / LMG 19005 / NCIMB 14063 / MR-1).